The sequence spans 741 residues: Catalase-peroxidase (741 aa).

The N-terminal stretch at methionine 1–alanine 21 is a signal peptide. Residues tryptophan 109–tyrosine 231 constitute a cross-link (tryptophyl-tyrosyl-methioninium (Trp-Tyr) (with M-257)). The Proton acceptor role is filled by histidine 110. Positions tyrosine 231 to methionine 257 form a cross-link, tryptophyl-tyrosyl-methioninium (Tyr-Met) (with W-109). Histidine 272 contributes to the heme b binding site.

Belongs to the peroxidase family. Peroxidase/catalase subfamily. In terms of assembly, homodimer or homotetramer. The cofactor is heme b. Formation of the three residue Trp-Tyr-Met cross-link is important for the catalase, but not the peroxidase activity of the enzyme.

The catalysed reaction is H2O2 + AH2 = A + 2 H2O. The enzyme catalyses 2 H2O2 = O2 + 2 H2O. In terms of biological role, bifunctional enzyme with both catalase and broad-spectrum peroxidase activity. In Leptospira biflexa serovar Patoc (strain Patoc 1 / Ames), this protein is Catalase-peroxidase.